The primary structure comprises 146 residues: MKIYVDADACPVKDVIIFEATNVEIPVTLVTSFSHYSNAEQPKGVETIYVDSGADAADYRIMQLAKKEDLIVTQDYGLASLALAKGCIVLHHKGYKYTNDNIEQLLQTRYLSAMVRKSGKRTKGPKPFTAEDKEKFRALFKSMIAH.

It belongs to the UPF0178 family.

The sequence is that of UPF0178 protein BCG9842_B2187 from Bacillus cereus (strain G9842).